The sequence spans 123 residues: uncharacterized protein (123 aa).

The signal sequence occupies residues 1–20 (MSPLIVGTLIIILLSGLATA). Gly-96 carries the GPI-anchor amidated glycine lipid modification. The propeptide at 97–123 (SSPTTKRVIYIVMILLVLITLAVNLKH) is removed in mature form.

Its subcellular location is the cell membrane. This is an uncharacterized protein from Schizosaccharomyces pombe (strain 972 / ATCC 24843) (Fission yeast).